The chain runs to 513 residues: Acetylcholine receptor subunit delta (513 aa).

A signal peptide spans 1–18; sequence MAVLLALFGALVLSGGLC. At 19-244 the chain is on the extracellular side; sequence VNQEERLIHH…ITFYLIIKRK (226 aa). 2 N-linked (GlcNAc...) asparagine glycosylation sites follow: Asn-88 and Asn-161. A disulfide bond links Cys-148 and Cys-162. 3 consecutive transmembrane segments (helical) span residues 245–269, 277–295, and 311–332; these read PLFY…VFYL, MTLV…LLVS, and YLLF…VLNF. Topologically, residues 333-467 are cytoplasmic; sequence HFRTPSTHVM…WNRVARTLDR (135 aa). Phosphotyrosine; by Tyr-kinases is present on Tyr-388. Residues 468–490 traverse the membrane as a helical segment; it reads LCLFLITPMLVVGTLWIFLMGIY.

Belongs to the ligand-gated ion channel (TC 1.A.9) family. Acetylcholine receptor (TC 1.A.9.1) subfamily. As to quaternary structure, pentamer of two alpha chains, and one each of the beta, delta, and gamma chains.

The protein resides in the postsynaptic cell membrane. The protein localises to the cell membrane. The catalysed reaction is K(+)(in) = K(+)(out). It catalyses the reaction Na(+)(in) = Na(+)(out). In terms of biological role, after binding acetylcholine, the AChR responds by an extensive change in conformation that affects all subunits and leads to opening of an ion-conducting channel across the plasma membrane. This is Acetylcholine receptor subunit delta (CHRND) from Gallus gallus (Chicken).